Consider the following 234-residue polypeptide: Sugar fermentation stimulation protein A (234 aa).

Residues 201–220 constitute a DNA-binding region (H-T-H motif); the sequence is LLSEAQNKGVEVLAYKAELS.

It belongs to the SfsA family.

In terms of biological role, binds to DNA non-specifically. Could be a regulatory factor involved in maltose metabolism. In Salmonella agona (strain SL483), this protein is Sugar fermentation stimulation protein A.